Reading from the N-terminus, the 510-residue chain is DNA nucleotidylexotransferase (510 aa).

The Nuclear localization signal motif lies at 11–17 (PRRKQPK). The BRCT domain maps to 27 to 124 (KYDIKFKDIA…QPVEIERKHR (98 aa)). Residues 254–258 (VGLRT) are involved in DNA binding. Residues 329–334 (GFRRGN) and 338–341 (HDVD) contribute to the a 2'-deoxyribonucleoside 5'-triphosphate site. Mg(2+)-binding residues include Asp-339, Asp-341, and Asp-434. 449–450 (GW) is an a 2'-deoxyribonucleoside 5'-triphosphate binding site.

This sequence belongs to the DNA polymerase type-X family. Mg(2+) is required as a cofactor.

It is found in the nucleus. It carries out the reaction DNA(n) + a 2'-deoxyribonucleoside 5'-triphosphate = DNA(n+1) + diphosphate. Template-independent DNA polymerase which catalyzes the random addition of deoxynucleoside 5'-triphosphate to the 3'-end of a DNA initiator. One of the in vivo functions of this enzyme is the addition of nucleotides at the junction (N region) of rearranged Ig heavy chain and T-cell receptor gene segments during the maturation of B- and T-cells. This Ambystoma mexicanum (Axolotl) protein is DNA nucleotidylexotransferase (DNTT).